The sequence spans 436 residues: Trigger factor (436 aa).

The 86-residue stretch at 163–248 (GDTVVIDFDG…IHEVKEKQLP (86 aa)) folds into the PPIase FKBP-type domain.

The protein belongs to the FKBP-type PPIase family. Tig subfamily.

Its subcellular location is the cytoplasm. The enzyme catalyses [protein]-peptidylproline (omega=180) = [protein]-peptidylproline (omega=0). Its function is as follows. Involved in protein export. Acts as a chaperone by maintaining the newly synthesized protein in an open conformation. Functions as a peptidyl-prolyl cis-trans isomerase. This is Trigger factor from Levilactobacillus brevis (strain ATCC 367 / BCRC 12310 / CIP 105137 / JCM 1170 / LMG 11437 / NCIMB 947 / NCTC 947) (Lactobacillus brevis).